The sequence spans 427 residues: 3-phosphoshikimate 1-carboxyvinyltransferase (427 aa).

3-phosphoshikimate contacts are provided by K20, S21, and R25. K20 contacts phosphoenolpyruvate. Phosphoenolpyruvate-binding residues include G92 and R120. 3-phosphoshikimate contacts are provided by S166, Q168, D312, and K339. Phosphoenolpyruvate is bound at residue Q168. Residue D312 is the Proton acceptor of the active site. Phosphoenolpyruvate is bound by residues R343 and R385.

This sequence belongs to the EPSP synthase family. As to quaternary structure, monomer.

Its subcellular location is the cytoplasm. It carries out the reaction 3-phosphoshikimate + phosphoenolpyruvate = 5-O-(1-carboxyvinyl)-3-phosphoshikimate + phosphate. It functions in the pathway metabolic intermediate biosynthesis; chorismate biosynthesis; chorismate from D-erythrose 4-phosphate and phosphoenolpyruvate: step 6/7. In terms of biological role, catalyzes the transfer of the enolpyruvyl moiety of phosphoenolpyruvate (PEP) to the 5-hydroxyl of shikimate-3-phosphate (S3P) to produce enolpyruvyl shikimate-3-phosphate and inorganic phosphate. The chain is 3-phosphoshikimate 1-carboxyvinyltransferase from Streptococcus pneumoniae (strain 70585).